The primary structure comprises 222 residues: MSKLGISSLFKTILLTAALAVSFTASAFTEGTDYMVLEKPIPNADKTLIKVFSYACPFCYKYDKAVTGPVSEKVKDIVAFTPFHLETKGEYGKQASEVFAVLINKDKAAGISLFDANSQFKKAKFAYYAAYHDKKERWSDGKDPAAFIKTGLDAAGMSQADFEAALKEPAVQETLEKWKASYDVAKIQGVPAYVVNGKYLIYTKSIKSIDAMADLIRELASK.

The first 27 residues, 1 to 27 (MSKLGISSLFKTILLTAALAVSFTASA), serve as a signal peptide directing secretion. One can recognise a Thioredoxin domain in the interval 28-221 (FTEGTDYMVL…MADLIRELAS (194 aa)). Cysteines 56 and 59 form a disulfide.

It belongs to the thioredoxin family. DsbL subfamily. As to quaternary structure, interacts with DsbI.

It localises to the periplasm. Involved in disulfide-bond formation. Acts by transferring its disulfide bond to other proteins. Part of a redox system composed of DsbI and DsbL that mediates formation of an essential disulfide bond in AssT. The polypeptide is Thiol:disulfide interchange protein DsbL (Escherichia coli O6:H1 (strain CFT073 / ATCC 700928 / UPEC)).